We begin with the raw amino-acid sequence, 120 residues long: Large ribosomal subunit protein uL22 (120 aa).

The protein belongs to the universal ribosomal protein uL22 family. As to quaternary structure, part of the 50S ribosomal subunit.

In terms of biological role, this protein binds specifically to 23S rRNA; its binding is stimulated by other ribosomal proteins, e.g. L4, L17, and L20. It is important during the early stages of 50S assembly. It makes multiple contacts with different domains of the 23S rRNA in the assembled 50S subunit and ribosome. The globular domain of the protein is located near the polypeptide exit tunnel on the outside of the subunit, while an extended beta-hairpin is found that lines the wall of the exit tunnel in the center of the 70S ribosome. The protein is Large ribosomal subunit protein uL22 of Crocosphaera subtropica (strain ATCC 51142 / BH68) (Cyanothece sp. (strain ATCC 51142)).